The primary structure comprises 264 residues: Cysteine-rich repeat secretory protein 26 (264 aa).

The signal sequence occupies residues 1–27 (MSSNIFGSVPILVVVAIQLLLVHNVSS). 2 Gnk2-homologous domains span residues 34–142 (YLNH…SVDS) and 148–261 (YKRM…LYPF).

Belongs to the cysteine-rich repeat secretory protein family.

It is found in the secreted. In Arabidopsis thaliana (Mouse-ear cress), this protein is Cysteine-rich repeat secretory protein 26 (CRRSP26).